We begin with the raw amino-acid sequence, 45 residues long: YKRCHKKEGHCFPKTVICLPPSSDFGKMDCRWKWKCCKKGSVNNA.

Cystine bridges form between Cys-4/Cys-36, Cys-11/Cys-30, and Cys-18/Cys-37.

Belongs to the crotamine-myotoxin family. As to quaternary structure, monomer. Expressed by the venom gland.

The protein resides in the secreted. Its function is as follows. Cationic peptide that possesses multiple functions. It acts as a cell-penetrating peptide (CPP), and as a potent voltage-gated potassium channel (Kv) inhibitor. It exhibits antimicrobial activities, hind limb paralysis, and severe muscle necrosis by a non-enzymatic mechanism. The sequence is that of Myotoxin-2 from Crotalus viridis viridis (Prairie rattlesnake).